The chain runs to 483 residues: GTPase Der (483 aa).

EngA-type G domains lie at 3–167 and 212–387; these read FTVA…GEER and LRIA…EIWN. Residues 9–16, 56–60, 119–122, 218–225, 265–269, and 330–333 contribute to the GTP site; these read GRPNVGKS, DTAGL, NKAE, GRPNAGKS, and NKWD. Positions 388 to 472 constitute a KH-like domain; sequence RRVSTGRLNR…PIRLSLRTSD (85 aa).

Belongs to the TRAFAC class TrmE-Era-EngA-EngB-Septin-like GTPase superfamily. EngA (Der) GTPase family. Associates with the 50S ribosomal subunit.

In terms of biological role, GTPase that plays an essential role in the late steps of ribosome biogenesis. The protein is GTPase Der of Brucella anthropi (strain ATCC 49188 / DSM 6882 / CCUG 24695 / JCM 21032 / LMG 3331 / NBRC 15819 / NCTC 12168 / Alc 37) (Ochrobactrum anthropi).